A 251-amino-acid polypeptide reads, in one-letter code: MPPVDKQAVAAAFGRAAPHYQQHNELQRRSADALMARLPARRFARVLDAGCGPGGISRYWRDNGCEVTALDLSAQMLAEARRQQAADHYVQADIEAIPLASAQFDLVWSNLAVQWCDSLQDAVQELYRMLRPGGVLAFTTLAADSLPELRQAWRAIDEKPHANRFLSREALDSALSGLRGEFALQTLSVPFADALSAMRSLKGIGATHLHEGRASRTLTRSRLQQLQLAWPKQQGACPLTYHIFTGVMTRD.

The protein belongs to the methyltransferase superfamily.

It carries out the reaction malonyl-[ACP] + S-adenosyl-L-methionine = malonyl-[ACP] methyl ester + S-adenosyl-L-homocysteine. Its pathway is cofactor biosynthesis; biotin biosynthesis. Its function is as follows. Converts the free carboxyl group of a malonyl-thioester to its methyl ester by transfer of a methyl group from S-adenosyl-L-methionine (SAM). It allows to synthesize pimeloyl-ACP via the fatty acid synthetic pathway. This is Malonyl-[acyl-carrier protein] O-methyltransferase from Enterobacter lignolyticus (strain SCF1).